The chain runs to 190 residues: Probable RNA-binding protein 18 (190 aa).

Residues 25–106 form the RRM domain; it reads HRLWIGNLDP…KKLVVRWAHA (82 aa). The disordered stretch occupies residues 166-190; it reads VYSYFKPPDKKRTTPYSRTAWKSRR.

This chain is Probable RNA-binding protein 18 (RBM18), found in Pongo abelii (Sumatran orangutan).